Reading from the N-terminus, the 104-residue chain is Ribonuclease P protein component 4 (104 aa).

Zn(2+) contacts are provided by Cys57, Cys60, Cys83, and Cys86.

It belongs to the eukaryotic/archaeal RNase P protein component 4 family. In terms of assembly, consists of a catalytic RNA component and at least 4-5 protein subunits. Requires Zn(2+) as cofactor.

It is found in the cytoplasm. The enzyme catalyses Endonucleolytic cleavage of RNA, removing 5'-extranucleotides from tRNA precursor.. Part of ribonuclease P, a protein complex that generates mature tRNA molecules by cleaving their 5'-ends. The sequence is that of Ribonuclease P protein component 4 from Saccharolobus islandicus (strain M.16.27) (Sulfolobus islandicus).